A 960-amino-acid chain; its full sequence is RasGEF domain-containing serine/threonine-protein kinase X (960 aa).

The Protein kinase domain occupies L21 to V274. ATP-binding positions include I27–V35 and K48. The Proton acceptor role is filled by D140. Positions N314–L368 are enriched in low complexity. 2 disordered regions span residues N314–A372 and G393–S413. The region spanning P437 to L565 is the N-terminal Ras-GEF domain. A disordered region spans residues N596–N651. The Ras-GEF domain occupies H712 to P957.

The protein belongs to the protein kinase superfamily. TKL Ser/Thr protein kinase family.

It carries out the reaction L-seryl-[protein] + ATP = O-phospho-L-seryl-[protein] + ADP + H(+). It catalyses the reaction L-threonyl-[protein] + ATP = O-phospho-L-threonyl-[protein] + ADP + H(+). Functionally, promotes the exchange of Ras-bound GDP by GTP. In Dictyostelium discoideum (Social amoeba), this protein is RasGEF domain-containing serine/threonine-protein kinase X (gefX).